A 166-amino-acid chain; its full sequence is Large ribosomal subunit protein uL10 (166 aa).

It belongs to the universal ribosomal protein uL10 family. In terms of assembly, part of the ribosomal stalk of the 50S ribosomal subunit. The N-terminus interacts with L11 and the large rRNA to form the base of the stalk. The C-terminus forms an elongated spine to which L12 dimers bind in a sequential fashion forming a multimeric L10(L12)X complex.

Functionally, forms part of the ribosomal stalk, playing a central role in the interaction of the ribosome with GTP-bound translation factors. The sequence is that of Large ribosomal subunit protein uL10 from Azotobacter vinelandii (strain DJ / ATCC BAA-1303).